We begin with the raw amino-acid sequence, 267 residues long: PF03932 family protein CutC (267 aa).

The protein belongs to the CutC family.

Its subcellular location is the cytoplasm. The chain is PF03932 family protein CutC from Xylella fastidiosa (strain 9a5c).